Consider the following 426-residue polypeptide: Histidine--tRNA ligase (426 aa).

This sequence belongs to the class-II aminoacyl-tRNA synthetase family. In terms of assembly, homodimer.

It localises to the cytoplasm. It catalyses the reaction tRNA(His) + L-histidine + ATP = L-histidyl-tRNA(His) + AMP + diphosphate + H(+). The sequence is that of Histidine--tRNA ligase from Streptococcus pyogenes serotype M3 (strain ATCC BAA-595 / MGAS315).